The sequence spans 236 residues: NAD-dependent protein deacetylase (236 aa).

The Deacetylase sirtuin-type domain occupies 1-236 (MIKDWLQESN…EFLRSISNEG (236 aa)). The NAD(+) site is built by A18, T22, F29, R30, Q96, V98, D99, and H114. A nicotinamide-binding site is contributed by F29. The nicotinamide site is built by V98 and D99. H114 serves as the catalytic Proton acceptor. Residues C122, C125, C141, and C143 each contribute to the Zn(2+) site. NAD(+) contacts are provided by S181, S182, N206, and I225.

This sequence belongs to the sirtuin family. Class U subfamily. It depends on Zn(2+) as a cofactor.

The protein localises to the cytoplasm. The enzyme catalyses N(6)-acetyl-L-lysyl-[protein] + NAD(+) + H2O = 2''-O-acetyl-ADP-D-ribose + nicotinamide + L-lysyl-[protein]. Its function is as follows. NAD-dependent protein deacetylase which modulates the activities of several enzymes which are inactive in their acetylated form. This Oceanobacillus iheyensis (strain DSM 14371 / CIP 107618 / JCM 11309 / KCTC 3954 / HTE831) protein is NAD-dependent protein deacetylase.